A 228-amino-acid chain; its full sequence is UPF0173 metal-dependent hydrolase Lm4b_01588 (228 aa).

It belongs to the UPF0173 family.

The protein is UPF0173 metal-dependent hydrolase Lm4b_01588 of Listeria monocytogenes serotype 4b (strain CLIP80459).